The primary structure comprises 480 residues: MVRLFLTLSPAISRFNLYPGISILARNNNSLRLQKHHKLKTKTPTFSLISPSSSPNFQRTRFYSTETRISSLPYSENPNFDDNLVVLGIETSCDDTAAAVVRGNGEILSQVISSQAELLVQYGGVAPKQAEEAHSRVIDKVVQDALDKANLTEKDLSAVAVTIGPGLSLCLRVGVRKARRVAGNFSLPIVGVHHMEAHALVARLVEQELSFPFMALLISGGHNLLVLAHKLGQYTQLGTTVDDAIGEAFDKTAKWLGLDMHRSGGPAVEELALEGDAKSVKFNVPMKYHKDCNFSYAGLKTQVRLAIEAKEIDAKCPVSSATNEDRRNRADIAASFQRVAVLHLEEKCERAIDWALELEPSIKHMVISGGVASNKYVRLRLNNIVENKNLKLVCPPPSLCTDNGVMVAWTGLEHFRVGRYDPPPPATEPEDYVYDLRPRWPLGEEYAKGRSEARSMRTARIHPSLTSIIRADSLQQQTQT.

A mitochondrion-targeting transit peptide spans 1-86; the sequence is MVRLFLTLSP…NPNFDDNLVV (86 aa). Positions 194 and 198 each coordinate a divalent metal cation. Substrate is bound by residues 217–221, Asp-250, Gly-265, Glu-269, 373–374, and Thr-401; these read LISGG and SN. Asp-402 lines the a divalent metal cation pocket.

This sequence belongs to the KAE1 / TsaD family. Homodimer. A divalent metal cation is required as a cofactor. Expressed in young developing leaves, roots, flowers and siliques.

The protein localises to the mitochondrion inner membrane. It catalyses the reaction L-threonylcarbamoyladenylate + adenosine(37) in tRNA = N(6)-L-threonylcarbamoyladenosine(37) in tRNA + AMP + H(+). Required for the formation of a threonylcarbamoyl group on adenosine at position 37 (t(6)A37) in mitochondrial tRNAs that read codons beginning with adenine. Probably involved in the transfer of the threonylcarbamoyl moiety of threonylcarbamoyl-AMP (TC-AMP) to the N6 group of A37. Involved in mitochondrial genome maintenance. May have a role in embryonic development in plants. The protein is Probable tRNA N6-adenosine threonylcarbamoyltransferase, mitochondrial of Arabidopsis thaliana (Mouse-ear cress).